Here is a 281-residue protein sequence, read N- to C-terminus: Release factor glutamine methyltransferase (281 aa).

Glu142 and Asn184 together coordinate S-adenosyl-L-methionine. 184 to 187 (NPPY) contributes to the substrate binding site. Positions 261 to 281 (AADHPDLNNRPRFATARKALP) are disordered.

This sequence belongs to the protein N5-glutamine methyltransferase family. PrmC subfamily.

The enzyme catalyses L-glutaminyl-[peptide chain release factor] + S-adenosyl-L-methionine = N(5)-methyl-L-glutaminyl-[peptide chain release factor] + S-adenosyl-L-homocysteine + H(+). Methylates the class 1 translation termination release factors RF1/PrfA and RF2/PrfB on the glutamine residue of the universally conserved GGQ motif. In Streptomyces coelicolor (strain ATCC BAA-471 / A3(2) / M145), this protein is Release factor glutamine methyltransferase.